The following is a 276-amino-acid chain: N-alpha-acetyltransferase 60 (276 aa).

Residues 34–239 enclose the N-acetyltransferase domain; it reads VQLRFLVPDD…WTLLDHIKHY (206 aa). Position 59 (Tyr59) interacts with substrate. Tyr139 is a catalytic residue. Residue Leu141 participates in substrate binding. Residues 143 to 145 and 151 to 156 contribute to the acetyl-CoA site; these read LGV and RNGIGS. The active site involves His180. Residues Asn185 and 192 to 195 contribute to the acetyl-CoA site; that span reads YEKR. The tract at residues 204–215 is required for homodimerization; that stretch reads PYYYNIRGKGKD. Tyr207 contributes to the substrate binding site.

It belongs to the acetyltransferase family. NAA60 subfamily.

The catalysed reaction is N-terminal L-methionyl-[transmembrane protein] + acetyl-CoA = N-terminal N(alpha)-acetyl-L-methionyl-[transmembrane protein] + CoA + H(+). The enzyme catalyses L-lysyl-[protein] + acetyl-CoA = N(6)-acetyl-L-lysyl-[protein] + CoA + H(+). In terms of biological role, displays alpha (N-terminal) acetyltransferase activity towards a range of N-terminal sequences including those starting with Met-Lys, Met-Val, Met-Ala and Met-Met. Required for normal chromosomal segregation during anaphase. Its function is as follows. Shows histone acetyltransferase activity toward free histones. Does not show histone acetyltransferase activity toward free histones. This chain is N-alpha-acetyltransferase 60, found in Drosophila melanogaster (Fruit fly).